The following is a 141-amino-acid chain: Large ribosomal subunit protein uL11c (141 aa).

The protein belongs to the universal ribosomal protein uL11 family. As to quaternary structure, part of the ribosomal stalk of the 50S ribosomal subunit. Interacts with L10 and the large rRNA to form the base of the stalk. L10 forms an elongated spine to which L12 dimers bind in a sequential fashion forming a multimeric L10(L12)X complex.

It localises to the plastid. The protein resides in the chloroplast. Its function is as follows. Forms part of the ribosomal stalk which helps the ribosome interact with GTP-bound translation factors. This chain is Large ribosomal subunit protein uL11c, found in Pyropia yezoensis (Susabi-nori).